The following is a 213-amino-acid chain: GrpE protein homolog, mitochondrial (213 aa).

The segment at S35 to V55 is disordered. Residues K38 to V55 are compositionally biased toward basic and acidic residues.

Belongs to the GrpE family. Probable component of the PAM complex at least composed of a mitochondrial HSP70 protein, Roe1, TIM44, blp/TIM16 and TIM14.

It localises to the mitochondrion matrix. Essential component of the PAM complex, a complex required for the translocation of transit peptide-containing proteins from the inner membrane into the mitochondrial matrix in an ATP-dependent manner. Seems to control the nucleotide-dependent binding of mitochondrial HSP70 to substrate proteins. This chain is GrpE protein homolog, mitochondrial (Roe1), found in Drosophila melanogaster (Fruit fly).